A 246-amino-acid chain; its full sequence is Cell division protein ZapD (246 aa).

This sequence belongs to the ZapD family. Interacts with FtsZ.

It localises to the cytoplasm. Its function is as follows. Cell division factor that enhances FtsZ-ring assembly. Directly interacts with FtsZ and promotes bundling of FtsZ protofilaments, with a reduction in FtsZ GTPase activity. The sequence is that of Cell division protein ZapD from Vibrio cholerae serotype O1 (strain ATCC 39541 / Classical Ogawa 395 / O395).